Here is a 436-residue protein sequence, read N- to C-terminus: Trigger factor (436 aa).

The PPIase FKBP-type domain occupies 161 to 246 (DLRVNMDFVG…LNKVEKQDLP (86 aa)).

This sequence belongs to the FKBP-type PPIase family. Tig subfamily.

The protein localises to the cytoplasm. It catalyses the reaction [protein]-peptidylproline (omega=180) = [protein]-peptidylproline (omega=0). Involved in protein export. Acts as a chaperone by maintaining the newly synthesized protein in an open conformation. Functions as a peptidyl-prolyl cis-trans isomerase. This is Trigger factor from Tolumonas auensis (strain DSM 9187 / NBRC 110442 / TA 4).